The chain runs to 698 residues: Sialic acid-binding Ig-like lectin 11 (698 aa).

The N-terminal stretch at methionine 1–serine 27 is a signal peptide. Residues leucine 28–leucine 561 lie on the Extracellular side of the membrane. In terms of domain architecture, Ig-like V-type spans aspartate 31 to glutamate 134. 3 disulfides stabilise this stretch: cysteine 49–cysteine 186, cysteine 54–cysteine 114, and cysteine 177–cysteine 228. N-linked (GlcNAc...) asparagine glycosylation is found at asparagine 55 and asparagine 90. An N-acetylneuraminate-binding site is contributed by arginine 132. 3 consecutive Ig-like C2-type domains span residues proline 159 to arginine 244, proline 251 to serine 350, and proline 355 to serine 452. A glycan (N-linked (GlcNAc...) asparagine) is linked at asparagine 262. Residues cysteine 287 and cysteine 334 are joined by a disulfide bond. N-linked (GlcNAc...) asparagine glycosylation is found at asparagine 366 and asparagine 375. Cysteine 391 and cysteine 436 form a disulfide bridge. 2 N-linked (GlcNAc...) asparagine glycosylation sites follow: asparagine 497 and asparagine 515. Residues glycine 562–valine 584 traverse the membrane as a helical segment. Residues lysine 585–lysine 698 are Cytoplasmic-facing. Residues alanine 596–glycine 635 are disordered. Positions leucine 642–leucine 647 match the ITIM motif motif. Tyrosine 668 carries the post-translational modification Phosphotyrosine. Positions threonine 675–lysine 698 are disordered.

Belongs to the immunoglobulin superfamily. SIGLEC (sialic acid binding Ig-like lectin) family. In terms of assembly, interacts with PTPN6/SHP-1 and PTPN11/SHP-2 upon phosphorylation. Post-translationally, phosphorylated on tyrosine residues. As to expression, expressed by macrophages in various tissues including Kupffer cells. Also found in brain microglia.

It localises to the membrane. Its function is as follows. Putative adhesion molecule that mediates sialic-acid dependent binding to cells. Preferentially binds to alpha-2,8-linked sialic acid. The sialic acid recognition site may be masked by cis interactions with sialic acids on the same cell surface. In the immune response, may act as an inhibitory receptor upon ligand induced tyrosine phosphorylation by recruiting cytoplasmic phosphatase(s) via their SH2 domain(s) that block signal transduction through dephosphorylation of signaling molecules. This Homo sapiens (Human) protein is Sialic acid-binding Ig-like lectin 11 (SIGLEC11).